A 599-amino-acid polypeptide reads, in one-letter code: Mediator of RNA polymerase II transcription subunit 26 (599 aa).

Positions 10-87 (QIRDRLLQAI…RSWQKLIEPV (78 aa)) constitute a TFIIS N-terminal domain. Disordered stretches follow at residues 98–331 (AGAP…RLEL), 352–403 (AGLG…RDYT), and 427–470 (FDPM…LQSP). Over residues 123-133 (SVHDLKYRNDM) the composition is skewed to basic and acidic residues. Residues 174-191 (VPNSSPLPTNGISGSPES) are compositionally biased toward polar residues. Positions 207–218 (NRLEHGENDKHS) are enriched in basic and acidic residues. Residues 314-324 (SPLPLAQPSTP) are compositionally biased toward pro residues. A compositionally biased stretch (basic and acidic residues) spans 441–463 (EPVRADSPVHTEQPRTELDKPEA). A phosphoserine mark is found at S447 and S469.

This sequence belongs to the Mediator complex subunit 26 family. In terms of assembly, component of the Mediator complex, which is composed of MED1, MED4, MED6, MED7, MED8, MED9, MED10, MED11, MED12, MED13, MED13L, MED14, MED15, MED16, MED17, MED18, MED19, MED20, MED21, MED22, MED23, MED24, MED25, MED26, MED27, MED29, MED30, MED31, CCNC, CDK8 and CDC2L6/CDK11. The MED12, MED13, CCNC and CDK8 subunits form a distinct module termed the CDK8 module. Mediator containing the CDK8 module is less active than Mediator lacking this module in supporting transcriptional activation. Individual preparations of the Mediator complex lacking one or more distinct subunits have been variously termed ARC, CRSP, DRIP, PC2, SMCC and TRAP. Interacts with CEBPB (when not methylated).

It localises to the nucleus. Functionally, component of the Mediator complex, a coactivator involved in the regulated transcription of nearly all RNA polymerase II-dependent genes. Mediator functions as a bridge to convey information from gene-specific regulatory proteins to the basal RNA polymerase II transcription machinery. Mediator is recruited to promoters by direct interactions with regulatory proteins and serves as a scaffold for the assembly of a functional pre-initiation complex with RNA polymerase II and the general transcription factors. The chain is Mediator of RNA polymerase II transcription subunit 26 (MED26) from Bos taurus (Bovine).